A 469-amino-acid chain; its full sequence is UDP-N-acetylmuramate--L-alanine ligase (469 aa).

112–118 (GTHGKTT) serves as a coordination point for ATP.

Belongs to the MurCDEF family.

The protein localises to the cytoplasm. It catalyses the reaction UDP-N-acetyl-alpha-D-muramate + L-alanine + ATP = UDP-N-acetyl-alpha-D-muramoyl-L-alanine + ADP + phosphate + H(+). Its pathway is cell wall biogenesis; peptidoglycan biosynthesis. Functionally, cell wall formation. In Methylibium petroleiphilum (strain ATCC BAA-1232 / LMG 22953 / PM1), this protein is UDP-N-acetylmuramate--L-alanine ligase.